Consider the following 1675-residue polypeptide: Clathrin heavy chain 1 (1675 aa).

At Ala2 the chain carries N-acetylalanine. A globular terminal domain region spans residues 2 to 479 (AQILPIRFQE…VDPTLALSVY (478 aa)). WD40-like repeat stretches follow at residues 24–67 (NIGF…RPIS), 68–107 (ADSAIMNPASKVIALKAGKTLQIFNIEMKSKMKAHTMTDD), 108–149 (VTFW…SSLA), 150–195 (GCQI…QPIE), 196–257 (GHAA…PEAQ), 258–301 (NDFP…ISGE), and 302–330 (TIFVTAPHEATAGIIGVNRKGQVLSVCVE). A Phosphoserine modification is found at Ser67. Thr105 is subject to Phosphothreonine. Tyr184 is subject to Phosphotyrosine. Thr394 is subject to Phosphothreonine. Positions 449-465 (EKWLKEDKLECSEELGD) are binding site for the uncoating ATPase, involved in lattice disassembly. The interval 480–523 (LRANVPNKVIQCFAETGQVQKIVLYAKKVGYTPDWIFLLRNVMR) is flexible linker. Residues 524–634 (ISPDQGQQFA…RALEHFTDLY (111 aa)) form a distal segment region. Residues 524 to 1675 (ISPDQGQQFA…QPQPGFGYSM (1152 aa)) form a heavy chain arm region. CHCR repeat units follow at residues 537-683 (VQDE…QICV), 686-828 (ASKY…SEDV), 833-972 (ILVV…PLID), 979-1124 (LSET…VKEA), 1128-1269 (YIKA…FRLA), 1274-1420 (LHIV…LLLN), and 1423-1566 (LMVL…RECF). Position 634 is a phosphotyrosine (Tyr634). The tract at residues 639-1675 (AVVHTHLLNP…QPQPGFGYSM (1037 aa)) is proximal segment. Lys737 carries the N6-succinyllysine modification. An N6-acetyllysine modification is found at Lys856. Position 899 is a phosphotyrosine (Tyr899). Residue Ser1167 is modified to Phosphoserine. At Tyr1206 the chain carries Phosphotyrosine. Positions 1213–1522 (AAKLLYNNVS…YLFKGNNRWK (310 aa)) are involved in binding clathrin light chain. Phosphoserine is present on Ser1229. Residue Lys1441 is modified to N6-acetyllysine; alternate. N6-succinyllysine; alternate is present on Lys1441. A phosphotyrosine mark is found at Tyr1477 and Tyr1487. Residue Ser1494 is modified to Phosphoserine. Lys1501 is subject to N6-acetyllysine. The segment at 1550-1675 (AEELLQWFLQ…QPQPGFGYSM (126 aa)) is trimerization.

This sequence belongs to the clathrin heavy chain family. As to quaternary structure, clathrin triskelions, composed of 3 heavy chains and 3 light chains, are the basic subunits of the clathrin coat. In the presence of light chains, hub assembly is influenced by both the pH and the concentration of calcium. Interacts with HIP1. Interacts with DENND1A, DENND1B and DENND1C. Interacts with ERBB2. Interacts with FKBP6. Interacts with OCRL. Interacts with CKAP5 and TACC3 forming the TACC3/ch-TOG/clathrin complex located at spindle inter-microtubules bridges; the complex implicates clathrin triskelions; TACC3 and CLTC are proposed to form a composite microtubule interaction surface. Plays a role in early autophagosome formation. Interacts with ATG16L1 (via N-terminus). Interacts with RFTN1; the interaction occurs in response to pathogens. Interacts with USP2 isoform 2. Interacts with TMEM106B (via N-terminus). Interacts with DNAJC6; this interaction produces a local change in heavy-chain contacts, creating a detectable global distortion of the clathrin coat and leads to the recruitment of HSPA8.

The protein localises to the cytoplasmic vesicle membrane. The protein resides in the membrane. It is found in the coated pit. Its subcellular location is the melanosome. It localises to the cytoplasm. The protein localises to the cytoskeleton. The protein resides in the spindle. Functionally, clathrin is the major protein of the polyhedral coat of coated pits and vesicles. Two different adapter protein complexes link the clathrin lattice either to the plasma membrane or to the trans-Golgi network. Acts as a component of the TACC3/ch-TOG/clathrin complex proposed to contribute to stabilization of kinetochore fibers of the mitotic spindle by acting as inter-microtubule bridge. The TACC3/ch-TOG/clathrin complex is required for the maintenance of kinetochore fiber tension. Plays a role in early autophagosome formation. Interaction with DNAJC6 mediates the recruitment of HSPA8 to the clathrin lattice and creates local destabilization of the lattice promoting uncoating. This chain is Clathrin heavy chain 1, found in Mus musculus (Mouse).